The following is a 567-amino-acid chain: Proline--tRNA ligase (567 aa).

The protein belongs to the class-II aminoacyl-tRNA synthetase family. ProS type 1 subfamily. As to quaternary structure, homodimer.

The protein resides in the cytoplasm. It carries out the reaction tRNA(Pro) + L-proline + ATP = L-prolyl-tRNA(Pro) + AMP + diphosphate. Its function is as follows. Catalyzes the attachment of proline to tRNA(Pro) in a two-step reaction: proline is first activated by ATP to form Pro-AMP and then transferred to the acceptor end of tRNA(Pro). As ProRS can inadvertently accommodate and process non-cognate amino acids such as alanine and cysteine, to avoid such errors it has two additional distinct editing activities against alanine. One activity is designated as 'pretransfer' editing and involves the tRNA(Pro)-independent hydrolysis of activated Ala-AMP. The other activity is designated 'posttransfer' editing and involves deacylation of mischarged Ala-tRNA(Pro). The misacylated Cys-tRNA(Pro) is not edited by ProRS. The sequence is that of Proline--tRNA ligase from Staphylococcus aureus (strain bovine RF122 / ET3-1).